A 664-amino-acid chain; its full sequence is Intraflagellar transport protein 70A1 (664 aa).

TPR repeat units lie at residues 11–44, 45–78, 153–186, 188–220, 393–423, 424–456, and 458–491; these read DGEFTAVVYRLIRDSRYSEAVQLLSAELQRSSRS, RAGLSLLAYCYYRLQEFELAAECYEQLSQMHPEL, PDGLVNMGCLLYKEGHYEAACSKFLAALQASGYQ, DLSYNLALAYYSSRQYAPALKHIADIIERGIRQ, TKQVQEARHNRDDEIIKKAMNEYDETLEKYI, PVLMAQAKIYWNLENYPMVEKIFRKSVEFCNDH, and VWKLNVAHVLFMQENKYKEAIGFYEPIVKKNYDN. Positions 507-534 form a coiled coil; sequence YIMTSQNEEAEELMRKIEKEEEQLSYGD. The stretch at 543-576 is one TPR 8 repeat; the sequence is CIVNLVIGTLYCAKGNYDFGISRVIKSLEPYHKK.

This sequence belongs to the TTC30/dfy-1/fleer family. As to quaternary structure, interacts wit the IFT B complex component IFT52.

It is found in the cell projection. Its subcellular location is the cilium. Its function is as follows. Required for polyglutamylation of axonemal tubulin. Plays a role in anterograde intraflagellar transport (IFT), the process by which cilia precursors are transported from the base of the cilium to the site of their incorporation at the tip. The chain is Intraflagellar transport protein 70A1 (Ift70a1) from Mus musculus (Mouse).